Consider the following 472-residue polypeptide: Adenosylhomocysteinase (472 aa).

Residues Thr-61, Asp-136, and Glu-196 each coordinate substrate. Residue 197 to 199 coordinates NAD(+); that stretch reads TTT. Positions 226 and 230 each coordinate substrate. NAD(+) contacts are provided by residues Asn-231, 260–265, Glu-283, Asn-318, 339–341, and Asn-384; these read GYGDVG and IGH.

This sequence belongs to the adenosylhomocysteinase family. Requires NAD(+) as cofactor.

Its subcellular location is the cytoplasm. The enzyme catalyses S-adenosyl-L-homocysteine + H2O = L-homocysteine + adenosine. The protein operates within amino-acid biosynthesis; L-homocysteine biosynthesis; L-homocysteine from S-adenosyl-L-homocysteine: step 1/1. Functionally, may play a key role in the regulation of the intracellular concentration of adenosylhomocysteine. The protein is Adenosylhomocysteinase of Cupriavidus pinatubonensis (strain JMP 134 / LMG 1197) (Cupriavidus necator (strain JMP 134)).